We begin with the raw amino-acid sequence, 232 residues long: Small ribosomal subunit protein uS2 (232 aa).

This sequence belongs to the universal ribosomal protein uS2 family.

The sequence is that of Small ribosomal subunit protein uS2 from Natranaerobius thermophilus (strain ATCC BAA-1301 / DSM 18059 / JW/NM-WN-LF).